The chain runs to 319 residues: Probable enoyl-CoA hydratase alpha subunit (319 aa).

Positions 199–298 (FEAAKQRRLV…EIGMPVVLDW (100 aa)) are DUF35.

The protein belongs to the thioester dehydratase family. As to quaternary structure, heterodimer composed of ChsH1 and ChsH2. Two heterodimers combine to form a heterotetramer. The complex interacts with Ltp2 via the DUF35 C-terminal region of ChsH2.

Functionally, probably involved in bile acid degradation. This Thermomonospora curvata (strain ATCC 19995 / DSM 43183 / JCM 3096 / KCTC 9072 / NBRC 15933 / NCIMB 10081 / Henssen B9) protein is Probable enoyl-CoA hydratase alpha subunit.